The sequence spans 494 residues: Neuronal acetylcholine receptor subunit alpha-6 (494 aa).

Residues 1–31 (MHPKRRLCWCLPASGAWAFMLTSLIADTTAC) form the signal peptide. Residues 32–240 (ESEERLFHKL…TYSFYIRRLP (209 aa)) lie on the Extracellular side of the membrane. Residues Asn-54 and Asn-171 are each glycosylated (N-linked (GlcNAc...) asparagine). Cys-158 and Cys-172 are disulfide-bonded. A run of 3 helical transmembrane segments spans residues 241 to 265 (MFYT…FYLP), 272 to 290 (VTLC…LVIT), and 306 to 327 (YLLF…VLNI). At 328–468 (HYRTPTTHTM…WKYVAMVIDR (141 aa)) the chain is on the cytoplasmic side. The segment at 364–390 (KNISKKTKKGSAKTSGKSKHSKHKDNK) is disordered. A compositionally biased stretch (basic residues) spans 366 to 390 (ISKKTKKGSAKTSGKSKHSKHKDNK). Residues 469-489 (VFLWVFIILCVFGTAGLFIQP) traverse the membrane as a helical segment.

The protein belongs to the ligand-gated ion channel (TC 1.A.9) family. Acetylcholine receptor (TC 1.A.9.1) subfamily. Alpha-6/CHRNA6 sub-subfamily. In terms of assembly, neuronal AChR is composed of two different types of subunits: alpha and non-alpha (beta). CHRNA6/alpha-6 subunit can be combined to CHRNB2/beta-2, CHRNA4/alpha-4 and CHRNB3/beta-3 to give rise to functional receptors. Heteropentamers containing CHRNB3 have an stoichiometry of (CHRNA6:CHRNB2)2:CHRNB3. Interacts with LYPD6.

The protein localises to the synaptic cell membrane. It catalyses the reaction K(+)(in) = K(+)(out). The catalysed reaction is Na(+)(in) = Na(+)(out). It carries out the reaction Ca(2+)(in) = Ca(2+)(out). With respect to regulation, activated by a myriad of ligands such as acetylcholine, cytisine and nicotine. CHRNA6 nAChR activity is inhibited by the antagonists alpha-conotoxin MII and PIA, a small disulfide-constrained peptides from cone snails. Its function is as follows. Component of neuronal acetylcholine receptors (nAChRs) that function as pentameric, ligand-gated cation channels with high calcium permeability among other activities. nAChRs are excitatory neurotrasnmitter receptors formed by a collection of nAChR subunits known to mediate synaptic transmission in the nervous system and the neuromuscular junction. Each nAchR subunit confers differential attributes to channel properties, including activation, deactivation and desensitization kinetics, pH sensitivity, cation permeability, and binding to allosteric modulators. CHRNA6 forms pentameric channels with CHRNB2 and CHRNA4 that exhibit high sensitivity to ACh and nicotine and are predominantly expressed in only a few brain areas, including dopaminergic neurons, norepirephrine neurons and cells of the visual system. nAChrs containing CHRNA6 subunits mediate endogenous cholinergic modulation of dopamine and gamma-aminobutyric acid (GABA) release in response to nicotine at nerve terminals. Functionally, component of neuronal acetylcholine receptors (nAChRs) that function as pentameric, ligand-gated cation channels with high calcium permeability among other activities. nAChRs are excitatory neurotrasnmitter receptors formed by a collection of nAChR subunits known to mediate synaptic transmission in the nervous system and the neuromuscular junction. Each nAchR subunit confers differential attributes to channel properties, including activation, deactivation and desensitization kinetics, pH sensitivity, cation permeability, and binding to allosteric modulators. CHRNA6 forms pentameric channels with CHRNB2, CHRNB3 and CHRNA4 that exhibit high sensitivity to ACh and nicotine and are predominantly expressed in only a few brain areas, including dopaminergic neurons, norepirephrine neurons and cells of the visual system. nAChrs containing CHRNA6 subunits mediate endogenous cholinergic modulation of dopamine and gamma-aminobutyric acid (GABA) release in response to nicotine at nerve terminals. In Gallus gallus (Chicken), this protein is Neuronal acetylcholine receptor subunit alpha-6 (CHRNA6).